Reading from the N-terminus, the 1295-residue chain is Protein FORGETTER 1 (1295 aa).

3 stretches are compositionally biased toward pro residues: residues 1 to 14, 75 to 89, and 162 to 177; these read MTQS…PLPA, PQQP…PPPI, and PPTP…PPPE. Disordered regions lie at residues 1–20, 68–107, 153–204, and 626–688; these read MTQS…HSAA, RPQF…PAHG, LTAS…MDYR, and PEQP…NDSD. Positions 178–193 are enriched in acidic residues; sequence EVNEEAIEVEREEDEG. Positions 643 to 650 match the Nuclear localization signal motif; sequence RKRHSASP. Residues 669–688 show a composition bias toward acidic residues; sequence DNESDLESEADSADDSNDSD. Residues 691–741 form a PHD-type zinc finger; the sequence is FQICQICSGEDERKKLLHCSECDKLFHPDCVVPPVIDLPSEAWICFSCKEK.

Belongs to the SBNO family. As to quaternary structure, interacts with SWI/SNF and ISWI chromatin remodelers such as BRM, CHR11 and CHR17. Binds to histone H3.

The protein localises to the nucleus. Its function is as follows. Required for normal embryo development. Necessary to acquire heat stress (HS) memory, by modulating nucleosome occupancy and regulating heat-induced gene expression. Associates globally with the nucleosome-poor regions flanking the transcription units of expressed genes. Binds to the promoter regions, primarily to the proximal promoter just upstream of the transcriptional start sites (TSS) and somewhat more weakly to the region downstream of the transcription termination site (TTS), of actively expressed genes (e.g. HSA32, HSP18.2 and HSP22.0) in a heat-dependent fashion. This Arabidopsis thaliana (Mouse-ear cress) protein is Protein FORGETTER 1.